The sequence spans 163 residues: Nucleotide-binding protein KPK_4305 (163 aa).

Belongs to the YajQ family.

Functionally, nucleotide-binding protein. This Klebsiella pneumoniae (strain 342) protein is Nucleotide-binding protein KPK_4305.